The primary structure comprises 390 residues: Telobox protein 1 (390 aa).

The tract at residues 30 to 57 (ENPSKREVAQDVPGFERKPTKVRKPRVK) is disordered. Residues 32-48 (PSKREVAQDVPGFERKP) show a composition bias toward basic and acidic residues. HTH myb-type domains lie at 50-109 (KVRK…PEDY) and 135-193 (STRK…PERY). A DNA-binding region (H-T-H motif) is located at residues 78-105 (WKKILLDERFHFTNRSPNDLKDRFRTIL). Positions 115-143 (NAKTHMGRPQKIPHTVGLSKSTRKERKQF) are disordered. The segment at residues 162–189 (WTRISKDANLGLQNRRSTDLRDRFRNAF) is a DNA-binding region (H-T-H motif). Composition is skewed to polar residues over residues 244 to 257 (SNPNASPQQTTEQP) and 322 to 340 (ISPSTSQNSVQPFPFSIQQ). Disordered regions lie at residues 244–278 (SNPNASPQQTTEQPASDELLDWPHHNLPSQFFTSQ) and 316–390 (QPPS…DNRG). Low complexity predominate over residues 347-360 (PPLSSNTLNSSTLP).

It is found in the nucleus. Functionally, general transcription factor with prominent roles in controlling histone levels and stability. Binds and regulates the activities of many promoters, including those controlling the expression of all four types of canonical histones. Is also involved in the centromeric loading of cnp1 and maintenance of centromere identity. Moreover, regulates the expression of cdc2, a protease capable of histone clipping. The protein is Telobox protein 1 of Schizosaccharomyces pombe (strain 972 / ATCC 24843) (Fission yeast).